A 224-amino-acid chain; its full sequence is Proteasome subunit beta (224 aa).

Positions 1 to 6 (MDVMKG) are cleaved as a propeptide — removed in mature form; by autocatalysis. The active-site Nucleophile is the Thr7.

This sequence belongs to the peptidase T1B family. The 20S proteasome core is composed of 14 alpha and 14 beta subunits that assemble into four stacked heptameric rings, resulting in a barrel-shaped structure. The two inner rings, each composed of seven catalytic beta subunits, are sandwiched by two outer rings, each composed of seven alpha subunits. The catalytic chamber with the active sites is on the inside of the barrel. Has a gated structure, the ends of the cylinder being occluded by the N-termini of the alpha-subunits. Is capped at one or both ends by the proteasome regulatory ATPase, PAN.

The protein resides in the cytoplasm. It catalyses the reaction Cleavage of peptide bonds with very broad specificity.. With respect to regulation, the formation of the proteasomal ATPase PAN-20S proteasome complex, via the docking of the C-termini of PAN into the intersubunit pockets in the alpha-rings, triggers opening of the gate for substrate entry. Interconversion between the open-gate and close-gate conformations leads to a dynamic regulation of the 20S proteasome proteolysis activity. Component of the proteasome core, a large protease complex with broad specificity involved in protein degradation. In Methanocaldococcus sp. (strain FS406-22), this protein is Proteasome subunit beta.